Consider the following 198-residue polypeptide: Large ribosomal subunit protein bL9 (198 aa).

It belongs to the bacterial ribosomal protein bL9 family.

In terms of biological role, binds to the 23S rRNA. This chain is Large ribosomal subunit protein bL9, found in Bartonella tribocorum (strain CIP 105476 / IBS 506).